The primary structure comprises 513 residues: Pleiotropic regulator 1 (513 aa).

Met1 is modified (N-acetylmethionine). 2 positions are modified to phosphoserine: Ser119 and Ser200. 7 WD repeats span residues 201-240 (GHLGWVRCIAVEPGNQWFVTGSADRTIKIWDLASGKLKLS), 243-282 (GHISTVRGVIVSTRSPYLFSCGEDKQVKCWDLEYNKVIRH), 285-324 (GHLSAVYGLDLHPTIDVLVTCSRDSTARIWDVRTKASVHT), 327-366 (GHTNAVATVRCQAAEPQIITGSHDTTIRLWDLVAGKTRVT), 369-409 (NHKK…QNLS), 410-448 (GHNAIINTLTVNSDGVLVSGADNGTMHLWDWRTGYNFQR), and 459-498 (DSESGIFACAFDQSESRLLTAEADKTIKVYKEDDTATEET). Ser390 is subject to Phosphoserine.

It belongs to the WD repeat PRL1/PRL2 family. Identified in the spliceosome C complex. Component of the PRP19-CDC5L splicing complex composed of a core complex comprising a homotetramer of PRPF19, CDC5L, PLRG1 and BCAS2, and at least three less stably associated proteins CTNNBL1, CWC15 and HSPA8. Interacts (via its WD40 repeat domain) directly with CDC5L (via its C-terminal); the interaction is required for mRNA splicing but not for spliceosome assembly. Component of the minor spliceosome, which splices U12-type introns. Within this complex, interacts with CRIPT. Also interacts directly in the complex with BCAS2 and PRPF19. Interacts with USB1.

The protein resides in the nucleus. It is found in the nucleus speckle. Its function is as follows. Involved in pre-mRNA splicing as component of the spliceosome. Component of the PRP19-CDC5L complex that forms an integral part of the spliceosome and is required for activating pre-mRNA splicing. As a component of the minor spliceosome, involved in the splicing of U12-type introns in pre-mRNAs. This is Pleiotropic regulator 1 (PLRG1) from Bos taurus (Bovine).